Here is a 249-residue protein sequence, read N- to C-terminus: Inhibitor of growth protein 4 (249 aa).

A coiled-coil region spans residues 25–118; sequence FQLMRDLDQR…ADLKEKQIES (94 aa). Residues 115-160 are disordered; sequence QIESSDYDSSSSKGKKKGRAQKEKKAARARSKGKNSDEEAPKTAQK. A PHD-type zinc finger spans residues 196 to 245; the sequence is PTYCLCHQVSYGEMIGCDNPDCSIEWFHFACVGLTTKPRGKWFCPRCSQE. 8 residues coordinate Zn(2+): C199, C201, C212, C217, H223, C226, C239, and C242.

Belongs to the ING family. Homodimer. Component of the HBO1 complex.

It is found in the nucleus. Its function is as follows. Component of HBO1 complexes, which specifically mediate acetylation of histone H3 at 'Lys-14' (H3K14ac), and have reduced activity toward histone H4. Through chromatin acetylation it may function in DNA replication. The polypeptide is Inhibitor of growth protein 4 (ING4) (Gallus gallus (Chicken)).